The primary structure comprises 183 residues: Small ribosomal subunit protein uS4c (183 aa).

The region spanning Met82–Asn143 is the S4 RNA-binding domain.

It belongs to the universal ribosomal protein uS4 family. In terms of assembly, part of the 30S ribosomal subunit. Contacts protein S5. The interaction surface between S4 and S5 is involved in control of translational fidelity.

It is found in the plastid. The protein resides in the chloroplast. Functionally, one of the primary rRNA binding proteins, it binds directly to 16S rRNA where it nucleates assembly of the body of the 30S subunit. Its function is as follows. With S5 and S12 plays an important role in translational accuracy. The protein is Small ribosomal subunit protein uS4c (rps4) of Crocosmia sp. (strain Porto Alegre 034).